The chain runs to 150 residues: Heat shock protein beta-3 (150 aa).

The sHSP domain maps to 47 to 150; the sequence is KTRAAQSPPV…VEVKDPVGTK (104 aa).

It belongs to the small heat shock protein (HSP20) family.

Its subcellular location is the cytoplasm. It localises to the nucleus. In terms of biological role, inhibitor of actin polymerization. In Homo sapiens (Human), this protein is Heat shock protein beta-3 (HSPB3).